Reading from the N-terminus, the 444-residue chain is Phosphoglucosamine mutase (444 aa).

Serine 100 serves as the catalytic Phosphoserine intermediate. Positions 100, 240, 242, and 244 each coordinate Mg(2+). Serine 100 is modified (phosphoserine).

This sequence belongs to the phosphohexose mutase family. It depends on Mg(2+) as a cofactor. Activated by phosphorylation.

The enzyme catalyses alpha-D-glucosamine 1-phosphate = D-glucosamine 6-phosphate. Its function is as follows. Catalyzes the conversion of glucosamine-6-phosphate to glucosamine-1-phosphate. The sequence is that of Phosphoglucosamine mutase from Desulforamulus reducens (strain ATCC BAA-1160 / DSM 100696 / MI-1) (Desulfotomaculum reducens).